Consider the following 633-residue polypeptide: Extracellular metalloproteinase 3 (633 aa).

The first 18 residues, 1–18 (MHGLLLAGLLALPMNVLA), serve as a signal peptide directing secretion. Positions 19 to 246 (HPAEQHASNV…VHNVVDYVAS (228 aa)) are excised as a propeptide. N410 carries an N-linked (GlcNAc...) asparagine glycan. H429 contacts Zn(2+). E430 is a catalytic residue. H433 is a Zn(2+) binding site. N480 and N622 each carry an N-linked (GlcNAc...) asparagine glycan.

It belongs to the peptidase M36 family. It depends on Zn(2+) as a cofactor.

It localises to the secreted. In terms of biological role, secreted metalloproteinase probably acting as a virulence factor. The chain is Extracellular metalloproteinase 3 (MEP3) from Trichophyton equinum (Horse ringworm fungus).